A 192-amino-acid chain; its full sequence is Fe/S biogenesis protein NfuA (192 aa).

The [4Fe-4S] cluster site is built by Cys-149 and Cys-152.

It belongs to the NfuA family. In terms of assembly, homodimer. It depends on [4Fe-4S] cluster as a cofactor.

Involved in iron-sulfur cluster biogenesis. Binds a 4Fe-4S cluster, can transfer this cluster to apoproteins, and thereby intervenes in the maturation of Fe/S proteins. Could also act as a scaffold/chaperone for damaged Fe/S proteins. The polypeptide is Fe/S biogenesis protein NfuA (Shewanella frigidimarina (strain NCIMB 400)).